The chain runs to 441 residues: Zinc finger and BTB domain-containing protein 8A (441 aa).

The BTB domain maps to 24–92; that stretch reads CDCSILVEGK…VYSGKLSLTG (69 aa). The segment at 135–248 is disordered; it reads LSDKDTGSNG…HVSQSEEQVQ (114 aa). 2 positions are modified to phosphoserine: serine 161 and serine 167. Residues lysine 178, lysine 182, and lysine 199 each participate in a glycyl lysine isopeptide (Lys-Gly) (interchain with G-Cter in SUMO2) cross-link. Composition is skewed to basic and acidic residues over residues 198–208 and 227–242; these read AKHEQRKDPIK and GKGD…HVSQ. 2 C2H2-type zinc fingers span residues 282–304 and 310–333; these read FKCP…LRCH and YPCQ…RTIH. Residue lysine 437 forms a Glycyl lysine isopeptide (Lys-Gly) (interchain with G-Cter in SUMO2) linkage.

It is found in the nucleus. Its function is as follows. May be involved in transcriptional regulation. The sequence is that of Zinc finger and BTB domain-containing protein 8A (Zbtb8a) from Rattus norvegicus (Rat).